Consider the following 246-residue polypeptide: 5-oxoprolinase subunit A (246 aa).

Belongs to the LamB/PxpA family. As to quaternary structure, forms a complex composed of PxpA, PxpB and PxpC.

The catalysed reaction is 5-oxo-L-proline + ATP + 2 H2O = L-glutamate + ADP + phosphate + H(+). Functionally, catalyzes the cleavage of 5-oxoproline to form L-glutamate coupled to the hydrolysis of ATP to ADP and inorganic phosphate. This Cupriavidus pinatubonensis (strain JMP 134 / LMG 1197) (Cupriavidus necator (strain JMP 134)) protein is 5-oxoprolinase subunit A.